The chain runs to 187 residues: UPF0301 protein YqgE (187 aa).

It belongs to the UPF0301 (AlgH) family.

The protein is UPF0301 protein YqgE of Salmonella choleraesuis (strain SC-B67).